The sequence spans 517 residues: Rop guanine nucleotide exchange factor 9 (517 aa).

2 disordered regions span residues 16–76 (NLDR…SETE) and 428–517 (GEET…KDRH). The segment covering 39 to 63 (MPESQTQDSLGGSPVETSRPMTSRL) has biased composition (polar residues). The PRONE domain occupies 65-429 (SRRQDKQQSE…SLARKQCTGE (365 aa)). Positions 66–76 (RRQDKQQSETE) are enriched in basic and acidic residues. Residues 440 to 452 (ETDSASAGSSNYS) are compositionally biased toward polar residues.

As to quaternary structure, interacts with ARAC11/ROP1 and ARAC10/ROP11. Interacts with PRK6. Expressed in pollen grains and pollen tubes.

The protein resides in the cell membrane. Its function is as follows. Guanine-nucleotide exchange factor (GEF) that acts as an activator of Rop (Rho of plants) GTPases by promoting the exchange of GDP for GTP. This is Rop guanine nucleotide exchange factor 9 from Arabidopsis thaliana (Mouse-ear cress).